Consider the following 109-residue polypeptide: Oncomodulin-1 (109 aa).

Serine 2 is modified (N-acetylserine). 2 consecutive EF-hand domains span residues 39–74 (MSANQVKDVFRFIDNDQSGYLDEEELKFFLQKFESG) and 78–109 (LTESETKSLMAAADNDGDGKIGAEEFQEMVHS). Ca(2+) contacts are provided by aspartate 52, aspartate 54, serine 56, tyrosine 58, glutamate 63, aspartate 91, aspartate 93, aspartate 95, lysine 97, and glutamate 102.

The protein belongs to the parvalbumin family.

Functionally, has some calmodulin-like activity with respect to enzyme activation and growth regulation. Binds two calcium ions. The protein is Oncomodulin-1 (OCM) of Homo sapiens (Human).